Reading from the N-terminus, the 280-residue chain is 4-diphosphocytidyl-2-C-methyl-D-erythritol kinase (280 aa).

Lys-8 is an active-site residue. Pro-91 to Ser-101 serves as a coordination point for ATP. Residue Asp-133 is part of the active site.

Belongs to the GHMP kinase family. IspE subfamily.

It carries out the reaction 4-CDP-2-C-methyl-D-erythritol + ATP = 4-CDP-2-C-methyl-D-erythritol 2-phosphate + ADP + H(+). The protein operates within isoprenoid biosynthesis; isopentenyl diphosphate biosynthesis via DXP pathway; isopentenyl diphosphate from 1-deoxy-D-xylulose 5-phosphate: step 3/6. Catalyzes the phosphorylation of the position 2 hydroxy group of 4-diphosphocytidyl-2C-methyl-D-erythritol. The sequence is that of 4-diphosphocytidyl-2-C-methyl-D-erythritol kinase from Clostridium novyi (strain NT).